We begin with the raw amino-acid sequence, 244 residues long: MINPFSSFRWRHSSRSPAGIPEVEPQPPDASDPFASQREQMVKKQLIKRGIRDPRVLEAMGKVPRHLFVPSDLRDRAYRDCPLPIGYGQTISQPYIVAFMTEAARLTPESVVLEIGTGSGYQAAVLAELARQVYSLERLSPLAAQAQQTLAALGYRNVEVRQGDGYQGWPEHAPYDAILVTAAPPTVPMVLLDQLAVGGTLVVPVGESPSDSGAQGSQSLLILCKTAQGWVQKGAFPVQFVPMV.

Positions 1 to 39 (MINPFSSFRWRHSSRSPAGIPEVEPQPPDASDPFASQRE) are disordered. Residue serine 92 is part of the active site.

It belongs to the methyltransferase superfamily. L-isoaspartyl/D-aspartyl protein methyltransferase family.

The protein resides in the cytoplasm. It carries out the reaction [protein]-L-isoaspartate + S-adenosyl-L-methionine = [protein]-L-isoaspartate alpha-methyl ester + S-adenosyl-L-homocysteine. Functionally, catalyzes the methyl esterification of L-isoaspartyl residues in peptides and proteins that result from spontaneous decomposition of normal L-aspartyl and L-asparaginyl residues. It plays a role in the repair and/or degradation of damaged proteins. The protein is Protein-L-isoaspartate O-methyltransferase of Synechococcus sp. (strain JA-2-3B'a(2-13)) (Cyanobacteria bacterium Yellowstone B-Prime).